The following is a 397-amino-acid chain: Protein PEP-RELATED DEVELOPMENT ARRESTED 1, chloroplastic (397 aa).

Residues 1–52 (MLQSIHLRFSSTPSPSKRESLIIPSVICSFPFTSSSFRPKQTQKLKRLVQFC) constitute a chloroplast transit peptide. Basic and acidic residues predominate over residues 315–334 (KDEGADNLSKEDDSSTEGRK). Residues 315 to 351 (KDEGADNLSKEDDSSTEGRKPSGLNGRGSVTGRKPLP) form a disordered region.

Interacts with FSD2 and MRL7. Highly expressed in young leaves, shoots and flowers. Expressed at low levels in stems and siliques.

The protein localises to the plastid. The protein resides in the chloroplast stroma. It is found in the chloroplast nucleoid. Functionally, plays an essential role in early steps of chloroplast development. May be involved in the redox control of plastid gene expression by maintening the redox state around chloroplast nucleoids. May positively regulate plastid-encoded RNA polymerase (PEP) activity, through binding to FSD2. The sequence is that of Protein PEP-RELATED DEVELOPMENT ARRESTED 1, chloroplastic (PRDA1) from Arabidopsis thaliana (Mouse-ear cress).